Consider the following 210-residue polypeptide: uncharacterized protein (210 aa).

Over residues 101–114 (QELPEPSSPQSQSS) the composition is skewed to low complexity. The segment at 101–166 (QELPEPSSPQ…SSGVSSDLQK (66 aa)) is disordered. A compositionally biased stretch (polar residues) spans 147-164 (RSTSPVTASTSSGVSSDL).

This is an uncharacterized protein from Alcelaphine herpesvirus 1 (strain C500) (AlHV-1).